A 510-amino-acid polypeptide reads, in one-letter code: Crotonobetaine/carnitine--CoA ligase (510 aa).

This sequence belongs to the ATP-dependent AMP-binding enzyme family.

The enzyme catalyses 4-(trimethylamino)butanoate + ATP + CoA = 4-(trimethylamino)butanoyl-CoA + AMP + diphosphate. The catalysed reaction is crotonobetaine + ATP + CoA = crotonobetainyl-CoA + AMP + diphosphate. It catalyses the reaction (R)-carnitine + ATP + CoA = (R)-carnitinyl-CoA + AMP + diphosphate. It functions in the pathway amine and polyamine metabolism; carnitine metabolism. Catalyzes the transfer of CoA to carnitine, generating the initial carnitinyl-CoA needed for the CaiB reaction cycle. Also has activity toward crotonobetaine and gamma-butyrobetaine. This is Crotonobetaine/carnitine--CoA ligase from Shigella flexneri serotype 5b (strain 8401).